Reading from the N-terminus, the 416-residue chain is D-amino acid dehydrogenase 2 (416 aa).

FAD is bound at residue 5-19; it reads VCIIGAGVVGLATAY.

This sequence belongs to the DadA oxidoreductase family. FAD is required as a cofactor.

The enzyme catalyses a D-alpha-amino acid + A + H2O = a 2-oxocarboxylate + AH2 + NH4(+). In terms of biological role, oxidative deamination of D-amino acids. This chain is D-amino acid dehydrogenase 2 (dadA2), found in Pseudomonas aeruginosa (strain ATCC 15692 / DSM 22644 / CIP 104116 / JCM 14847 / LMG 12228 / 1C / PRS 101 / PAO1).